The following is a 517-amino-acid chain: ATP synthase subunit alpha 1 (517 aa).

176 to 183 contributes to the ATP binding site; sequence GDRQTGKT.

Belongs to the ATPase alpha/beta chains family. F-type ATPases have 2 components, CF(1) - the catalytic core - and CF(0) - the membrane proton channel. CF(1) has five subunits: alpha(3), beta(3), gamma(1), delta(1), epsilon(1). CF(0) has three main subunits: a(1), b(2) and c(9-12). The alpha and beta chains form an alternating ring which encloses part of the gamma chain. CF(1) is attached to CF(0) by a central stalk formed by the gamma and epsilon chains, while a peripheral stalk is formed by the delta and b chains.

Its subcellular location is the cell inner membrane. The enzyme catalyses ATP + H2O + 4 H(+)(in) = ADP + phosphate + 5 H(+)(out). Functionally, produces ATP from ADP in the presence of a proton gradient across the membrane. The alpha chain is a regulatory subunit. This is ATP synthase subunit alpha 1 from Shewanella frigidimarina (strain NCIMB 400).